The following is a 436-amino-acid chain: Phosphoribosylamine--glycine ligase (436 aa).

Positions Arg-106–Asp-318 constitute an ATP-grasp domain. Leu-133 to Thr-196 provides a ligand contact to ATP. Positions 276, 288, and 290 each coordinate Mg(2+). 3 residues coordinate Mn(2+): Gln-276, Glu-288, and Asn-290.

This sequence belongs to the GARS family. The cofactor is Mg(2+). Mn(2+) is required as a cofactor.

It catalyses the reaction 5-phospho-beta-D-ribosylamine + glycine + ATP = N(1)-(5-phospho-beta-D-ribosyl)glycinamide + ADP + phosphate + H(+). Its pathway is purine metabolism; IMP biosynthesis via de novo pathway; N(1)-(5-phospho-D-ribosyl)glycinamide from 5-phospho-alpha-D-ribose 1-diphosphate: step 2/2. The chain is Phosphoribosylamine--glycine ligase from Methanobrevibacter smithii (strain ATCC 35061 / DSM 861 / OCM 144 / PS).